A 167-amino-acid chain; its full sequence is Protein-export protein SecB (167 aa).

The protein belongs to the SecB family. In terms of assembly, homotetramer, a dimer of dimers. One homotetramer interacts with 1 SecA dimer.

It localises to the cytoplasm. In terms of biological role, one of the proteins required for the normal export of preproteins out of the cell cytoplasm. It is a molecular chaperone that binds to a subset of precursor proteins, maintaining them in a translocation-competent state. It also specifically binds to its receptor SecA. The protein is Protein-export protein SecB of Idiomarina loihiensis (strain ATCC BAA-735 / DSM 15497 / L2-TR).